We begin with the raw amino-acid sequence, 143 residues long: Subtelomeric hrmA-associated cluster protein cgnA (143 aa).

29 G-Q-I/R/S repeats span residues 11 to 13, 14 to 16, 17 to 19, 20 to 22, 23 to 25, 26 to 28, 29 to 31, 32 to 34, 35 to 37, 38 to 40, 41 to 43, 44 to 46, 47 to 49, 50 to 52, 53 to 55, 56 to 58, 59 to 61, 62 to 64, 65 to 67, 68 to 70, 71 to 73, 74 to 76, 77 to 79, 80 to 82, 83 to 85, 86 to 88, 89 to 91, 92 to 94, and 95 to 97; these read GQI, GPI, GQR, GQS, and GQA. Residues 11–68 enclose the Collagen-like domain; that stretch reads GQIGPIGQRGQSGQRGQSGQRGQSGQIGQSGQSGQSGQIGQIGQIGQIGQIGQIGQIG. The segment at 11–97 is 29 X 3 AA approximate tandem repeats of G-Q-I/R/S; sequence GQIGPIGQRG…IGQIGQIGQA (87 aa). The interval 16–49 is disordered; sequence IGQRGQSGQRGQSGQRGQSGQIGQSGQSGQSGQI.

Its subcellular location is the secreted. Its function is as follows. Collagen-like protein; part of the subtelomeric hrmA-associated cluster (HAC) containing genes that alter the hyphal surface (such as reduced total chitin or increased beta-glucan exposure) and perturb inter-hyphal interactions within the developing biofilms, resulting in a loss of vertically aligned polarized growing filaments. Consequently, this hypoxia-typic morphotype (called H-MORPH) with altered biofilm architecture leads to increased hypoxia fitness, increased host inflammation, rapid disease progression, and mortality in a murine model of invasive aspergillosis. CgnA is directly involved in the reduction of total surface chitin and the increase of beta-glucan exposure, and mediates the detachment of the extracellular matrix and especially of its component galactosaminogalactan (GAG). This Aspergillus fumigatus (strain ATCC MYA-4609 / CBS 101355 / FGSC A1100 / Af293) (Neosartorya fumigata) protein is Subtelomeric hrmA-associated cluster protein cgnA.